A 480-amino-acid polypeptide reads, in one-letter code: Immune evasion protein OPG047 (480 aa).

One can recognise a BTB domain in the interval 10-90 (CKNILALSMT…SYTGKVYIDS (81 aa)). Residues 125–223 (CVECYMMGIE…NYLSPRGINN (99 aa)) enclose the BACK domain. 5 Kelch repeats span residues 273–319 (VVYL…PANN), 320–363 (KLYV…SINN), 365–408 (IYVM…VFGR), 410–447 (LFLV…IVDN), and 448–480 (KLLL…WDGK).

Belongs to the orthopoxvirus OPG047 family.

In terms of biological role, might have a role in the suppression of host immune response. This is Immune evasion protein OPG047 (OPG047) from Vaccinia virus (strain Western Reserve) (VACV).